A 95-amino-acid polypeptide reads, in one-letter code: Aspartyl/glutamyl-tRNA(Asn/Gln) amidotransferase subunit C (95 aa).

The protein belongs to the GatC family. In terms of assembly, heterotrimer of A, B and C subunits.

It carries out the reaction L-glutamyl-tRNA(Gln) + L-glutamine + ATP + H2O = L-glutaminyl-tRNA(Gln) + L-glutamate + ADP + phosphate + H(+). The enzyme catalyses L-aspartyl-tRNA(Asn) + L-glutamine + ATP + H2O = L-asparaginyl-tRNA(Asn) + L-glutamate + ADP + phosphate + 2 H(+). In terms of biological role, allows the formation of correctly charged Asn-tRNA(Asn) or Gln-tRNA(Gln) through the transamidation of misacylated Asp-tRNA(Asn) or Glu-tRNA(Gln) in organisms which lack either or both of asparaginyl-tRNA or glutaminyl-tRNA synthetases. The reaction takes place in the presence of glutamine and ATP through an activated phospho-Asp-tRNA(Asn) or phospho-Glu-tRNA(Gln). This is Aspartyl/glutamyl-tRNA(Asn/Gln) amidotransferase subunit C from Brucella abortus (strain S19).